Reading from the N-terminus, the 507-residue chain is MAEQGRGQRGSGYGLGLSTRTQVTGYQFLARRTAMALTRWRVRMEIEPGRRQTLAVVASVSAALVICLGSLLWSFISPSGQINDSPIIADRDSGALYVRVGDRLYPALNLASARLITGRASNPHLVRGSQIDSMPHGPLVGIPGAPSDFNPASPATSSWLVCDTVAGPSTMPQSPHGVTVTVIDGTPDLTGHRRVLKGSDAVVLRYGGDAWVIREGRRSRIDATDRSVLLPLGLTPEQVTQARPMSHALYDALPVGPELVVPEVPDDGAAATFPGAPGPVGTVIVTPQISGPQQYSLVLTDGVQTLPPLVAQILQNAGRPGNTKPVTVQPSSLAKMPVVNRLDLSAYPDDPLNVMDIRDNPSTCWWWERTAGENRSRVQVISGPNIPVAPHEMNKVVDLVKADMSGREADQVYFGPNFANFVAVTGNNPAAQTTESLWWLTEAGARFGVEDTKEAREALGLGLTPSPAPWVVLRLLPQGPTLSRADALVEHDTLPMDMSPAELVVPK.

The helical transmembrane segment at 56–76 (VVASVSAALVICLGSLLWSFI) threads the bilayer.

Belongs to the EccB family. As to quaternary structure, part of the ESX-5 / type VII secretion system (T7SS), which is composed of cytosolic and membrane components. The ESX-5 membrane complex is composed of EccB5, EccC5, EccD5 and EccE5.

It localises to the cell inner membrane. In terms of biological role, an ATPase. Part of the ESX-5 specialized secretion system, which is responsible for the secretion of EsxN and a number of PE_PGRS and PPE proteins. In Mycobacterium marinum (strain ATCC BAA-535 / M), this protein is ESX-5 secretion system ATPase EccB5.